The following is a 211-amino-acid chain: Outer-membrane lipoprotein carrier protein (211 aa).

A signal peptide spans 1–24; sequence MRNRIIVSACAALAMFAIQAPAHA.

It belongs to the LolA family. As to quaternary structure, monomer.

The protein resides in the periplasm. Participates in the translocation of lipoproteins from the inner membrane to the outer membrane. Only forms a complex with a lipoprotein if the residue after the N-terminal Cys is not an aspartate (The Asp acts as a targeting signal to indicate that the lipoprotein should stay in the inner membrane). The chain is Outer-membrane lipoprotein carrier protein from Cupriavidus necator (strain ATCC 17699 / DSM 428 / KCTC 22496 / NCIMB 10442 / H16 / Stanier 337) (Ralstonia eutropha).